Here is a 430-residue protein sequence, read N- to C-terminus: tRNA(Ile)-lysidine synthase (430 aa).

An ATP-binding site is contributed by 21–26; the sequence is SGGLDS.

Belongs to the tRNA(Ile)-lysidine synthase family.

It is found in the cytoplasm. The catalysed reaction is cytidine(34) in tRNA(Ile2) + L-lysine + ATP = lysidine(34) in tRNA(Ile2) + AMP + diphosphate + H(+). Its function is as follows. Ligates lysine onto the cytidine present at position 34 of the AUA codon-specific tRNA(Ile) that contains the anticodon CAU, in an ATP-dependent manner. Cytidine is converted to lysidine, thus changing the amino acid specificity of the tRNA from methionine to isoleucine. The polypeptide is tRNA(Ile)-lysidine synthase (Salmonella paratyphi B (strain ATCC BAA-1250 / SPB7)).